A 195-amino-acid polypeptide reads, in one-letter code: Triosephosphate isomerase, cytosolic (195 aa).

The active-site Electrophile is the histidine 37. The active-site Proton acceptor is glutamate 107.

Belongs to the triosephosphate isomerase family. As to quaternary structure, homodimer.

It is found in the cytoplasm. It catalyses the reaction D-glyceraldehyde 3-phosphate = dihydroxyacetone phosphate. The protein operates within carbohydrate biosynthesis; gluconeogenesis. Its pathway is carbohydrate degradation; glycolysis; D-glyceraldehyde 3-phosphate from glycerone phosphate: step 1/1. This is Triosephosphate isomerase, cytosolic from Lactuca sativa (Garden lettuce).